The chain runs to 108 residues: SPbeta prophage-derived uncharacterized HTH-type transcriptional regulator YonR (108 aa).

An HTH cro/C1-type domain is found at 6-60 (LKKCRTSKGYSQQRMADFLGITRQGYGKYEIGKAEPDLKTLTKLSNILGVSTDFL). A DNA-binding region (H-T-H motif) is located at residues 17–36 (QQRMADFLGITRQGYGKYEI).

The polypeptide is SPbeta prophage-derived uncharacterized HTH-type transcriptional regulator YonR (yonR) (Bacillus subtilis (strain 168)).